The following is a 319-amino-acid chain: Lambda-crystallin homolog (319 aa).

Ala-2 bears the N-acetylalanine mark. Ser-3 carries the post-translational modification Phosphoserine. NAD(+) is bound by residues 16 to 17, Asp-36, Glu-97, and Lys-102; that span reads VI. Ser-111 bears the Phosphoserine mark.

Belongs to the 3-hydroxyacyl-CoA dehydrogenase family. Homodimer. Widely expressed, with highest levels in liver and kidney.

It localises to the cytoplasm. It carries out the reaction L-gulonate + NAD(+) = 3-dehydro-L-gulonate + NADH + H(+). Inhibited by malonate. Its function is as follows. Has high L-gulonate 3-dehydrogenase activity. It also exhibits low dehydrogenase activity toward L-3-hydroxybutyrate (HBA) and L-threonate. This chain is Lambda-crystallin homolog (CRYL1), found in Homo sapiens (Human).